Consider the following 460-residue polypeptide: Arginine biosynthesis bifunctional protein ArgJ, chloroplastic (460 aa).

Residues 1-26 constitute a chloroplast transit peptide; sequence MYLSVPHYPSLKFTAFQSHKRNFRVF. Substrate is bound by residues Thr-202, Lys-228, Thr-239, Glu-328, Asn-455, and Thr-460. Thr-239 serves as the catalytic Nucleophile.

It belongs to the ArgJ family. Heterodimer of an alpha and a beta chain.

The protein localises to the plastid. The protein resides in the chloroplast. It catalyses the reaction N(2)-acetyl-L-ornithine + L-glutamate = N-acetyl-L-glutamate + L-ornithine. The catalysed reaction is L-glutamate + acetyl-CoA = N-acetyl-L-glutamate + CoA + H(+). It participates in amino-acid biosynthesis; L-arginine biosynthesis; L-ornithine and N-acetyl-L-glutamate from L-glutamate and N(2)-acetyl-L-ornithine (cyclic): step 1/1. It functions in the pathway amino-acid biosynthesis; L-arginine biosynthesis; N(2)-acetyl-L-ornithine from L-glutamate: step 1/4. Functionally, catalyzes two activities which are involved in the cyclic version of arginine biosynthesis: the synthesis of acetylglutamate from glutamate and acetyl-CoA, and of ornithine by transacetylation between acetylornithine and glutamate. This is Arginine biosynthesis bifunctional protein ArgJ, chloroplastic from Citrullus lanatus (Watermelon).